Here is a 105-residue protein sequence, read N- to C-terminus: V-type ATP synthase subunit F (105 aa).

The protein belongs to the V-ATPase F subunit family.

Its function is as follows. Produces ATP from ADP in the presence of a proton gradient across the membrane. This is V-type ATP synthase subunit F from Clostridium perfringens (strain 13 / Type A).